Reading from the N-terminus, the 57-residue chain is Myrmicitoxin(1)-Pm7a (57 aa).

The signal sequence occupies residues 1 to 23 (MMKIIYAFLLIAVVAFMGSGIMA). Residues 24–31 (EPLAEAIA) constitute a propeptide that is removed on maturation.

It belongs to the formicidae venom clade 4 family. As to expression, expressed by the venom gland.

The protein resides in the secreted. In terms of biological role, probable neurotoxin. The sequence is that of Myrmicitoxin(1)-Pm7a from Pogonomyrmex maricopa (Maricopa harvester ant).